Here is a 645-residue protein sequence, read N- to C-terminus: Putative palmitoyltransferase ZDHHC13 (645 aa).

The interval Met-1–Ser-73 is disordered. At Met-1 to Lys-314 the chain is on the cytoplasmic side. Residues Asp-7 to His-20 show a composition bias toward basic and acidic residues. Positions Gly-23–Ser-33 are enriched in basic residues. A compositionally biased stretch (gly residues) spans His-34–Met-43. 5 ANK repeats span residues Glu-104–Gln-133, Leu-138–Leu-167, Glu-171–Leu-200, Asn-204–Ala-234, and Asn-239–Met-268. Residues Val-315 to Met-335 form a helical membrane-spanning segment. Residue Arg-336 is a topological domain, lumenal. A helical transmembrane segment spans residues Thr-337 to Ala-357. The Cytoplasmic portion of the chain corresponds to Ser-358–Leu-369. Residues Ile-370–Phe-390 traverse the membrane as a helical segment. The Lumenal portion of the chain corresponds to Leu-391 to Glu-394. Residues Pro-395–Ile-415 traverse the membrane as a helical segment. Topologically, residues Arg-416 to Pro-492 are cytoplasmic. The 51-residue stretch at Ile-449 to Val-499 folds into the DHHC domain. A helical transmembrane segment spans residues Phe-493–Ile-513. At Thr-514–Trp-542 the chain is on the lumenal side. A helical membrane pass occupies residues Leu-543–Leu-563. Topologically, residues Gln-564–Val-645 are cytoplasmic.

It belongs to the DHHC palmitoyltransferase family. AKR/ZDHHC17 subfamily.

It is found in the golgi apparatus membrane. The protein resides in the cytoplasmic vesicle membrane. In terms of biological role, putative palmitoyltransferase that could catalyze the addition of palmitate onto various protein substrates. In Danio rerio (Zebrafish), this protein is Putative palmitoyltransferase ZDHHC13.